Consider the following 122-residue polypeptide: Large ribosomal subunit protein uL14 (122 aa).

Belongs to the universal ribosomal protein uL14 family. As to quaternary structure, part of the 50S ribosomal subunit. Forms a cluster with proteins L3 and L19. In the 70S ribosome, L14 and L19 interact and together make contacts with the 16S rRNA in bridges B5 and B8.

Its function is as follows. Binds to 23S rRNA. Forms part of two intersubunit bridges in the 70S ribosome. The protein is Large ribosomal subunit protein uL14 of Maridesulfovibrio salexigens (strain ATCC 14822 / DSM 2638 / NCIMB 8403 / VKM B-1763) (Desulfovibrio salexigens).